Consider the following 238-residue polypeptide: Ubiquinone biosynthesis O-methyltransferase (238 aa).

Positions 36, 56, 77, and 125 each coordinate S-adenosyl-L-methionine.

This sequence belongs to the methyltransferase superfamily. UbiG/COQ3 family.

The enzyme catalyses a 3-demethylubiquinol + S-adenosyl-L-methionine = a ubiquinol + S-adenosyl-L-homocysteine + H(+). It catalyses the reaction a 3-(all-trans-polyprenyl)benzene-1,2-diol + S-adenosyl-L-methionine = a 2-methoxy-6-(all-trans-polyprenyl)phenol + S-adenosyl-L-homocysteine + H(+). The protein operates within cofactor biosynthesis; ubiquinone biosynthesis. Functionally, O-methyltransferase that catalyzes the 2 O-methylation steps in the ubiquinone biosynthetic pathway. This is Ubiquinone biosynthesis O-methyltransferase from Histophilus somni (strain 2336) (Haemophilus somnus).